The following is a 663-amino-acid chain: UvrABC system protein B (663 aa).

The Helicase ATP-binding domain maps to 26–414 (DGLESGLAKQ…DNVAEQVVRP (389 aa)). 39–46 (GVTGSGKT) contacts ATP. Positions 92 to 115 (YYDYYQPEAYVPASDTFIEKDASI) match the Beta-hairpin motif. Residues 430–596 (QVDDLMSEIR…GINKSVEDIL (167 aa)) form the Helicase C-terminal domain. The UVR domain maps to 624–659 (AKEINALEKQMYAHAQNMEFELAAKIRDEYLLLKEQ).

The protein belongs to the UvrB family. Forms a heterotetramer with UvrA during the search for lesions. Interacts with UvrC in an incision complex.

The protein resides in the cytoplasm. Functionally, the UvrABC repair system catalyzes the recognition and processing of DNA lesions. A damage recognition complex composed of 2 UvrA and 2 UvrB subunits scans DNA for abnormalities. Upon binding of the UvrA(2)B(2) complex to a putative damaged site, the DNA wraps around one UvrB monomer. DNA wrap is dependent on ATP binding by UvrB and probably causes local melting of the DNA helix, facilitating insertion of UvrB beta-hairpin between the DNA strands. Then UvrB probes one DNA strand for the presence of a lesion. If a lesion is found the UvrA subunits dissociate and the UvrB-DNA preincision complex is formed. This complex is subsequently bound by UvrC and the second UvrB is released. If no lesion is found, the DNA wraps around the other UvrB subunit that will check the other stand for damage. The polypeptide is UvrABC system protein B (Legionella pneumophila (strain Paris)).